The primary structure comprises 83 residues: ATP synthase subunit c (83 aa).

The next 2 helical transmembrane spans lie at 9 to 29 and 51 to 71; these read LICV…GIGI and MVFM…GLVI.

This sequence belongs to the ATPase C chain family. F-type ATPases have 2 components, F(1) - the catalytic core - and F(0) - the membrane proton channel. F(1) has five subunits: alpha(3), beta(3), gamma(1), delta(1), epsilon(1). F(0) has three main subunits: a(1), b(2) and c(10-14). The alpha and beta chains form an alternating ring which encloses part of the gamma chain. F(1) is attached to F(0) by a central stalk formed by the gamma and epsilon chains, while a peripheral stalk is formed by the delta and b chains.

The protein localises to the cell inner membrane. Functionally, f(1)F(0) ATP synthase produces ATP from ADP in the presence of a proton or sodium gradient. F-type ATPases consist of two structural domains, F(1) containing the extramembraneous catalytic core and F(0) containing the membrane proton channel, linked together by a central stalk and a peripheral stalk. During catalysis, ATP synthesis in the catalytic domain of F(1) is coupled via a rotary mechanism of the central stalk subunits to proton translocation. In terms of biological role, key component of the F(0) channel; it plays a direct role in translocation across the membrane. A homomeric c-ring of between 10-14 subunits forms the central stalk rotor element with the F(1) delta and epsilon subunits. In Desulfotalea psychrophila (strain LSv54 / DSM 12343), this protein is ATP synthase subunit c.